We begin with the raw amino-acid sequence, 404 residues long: Argininosuccinate synthase (404 aa).

7 to 15 (AYSGGLDTS) serves as a coordination point for ATP. 2 residues coordinate L-citrulline: Y85 and S90. Residue G115 participates in ATP binding. L-aspartate is bound by residues T117, N121, and D122. N121 contributes to the L-citrulline binding site. The L-citrulline site is built by R125, S178, S187, E264, and Y276.

Belongs to the argininosuccinate synthase family. Type 1 subfamily. Homotetramer.

It localises to the cytoplasm. The catalysed reaction is L-citrulline + L-aspartate + ATP = 2-(N(omega)-L-arginino)succinate + AMP + diphosphate + H(+). It participates in amino-acid biosynthesis; L-arginine biosynthesis; L-arginine from L-ornithine and carbamoyl phosphate: step 2/3. The sequence is that of Argininosuccinate synthase from Rhodopirellula baltica (strain DSM 10527 / NCIMB 13988 / SH1).